The sequence spans 250 residues: 2,3-bisphosphoglycerate-dependent phosphoglycerate mutase (250 aa).

Residues 10–17, 23–24, R62, 89–92, K100, 116–117, and 185–186 contribute to the substrate site; these read RHGESQWN, TG, ERHY, RR, and GN. Catalysis depends on H11, which acts as the Tele-phosphohistidine intermediate. E89 acts as the Proton donor/acceptor in catalysis.

It belongs to the phosphoglycerate mutase family. BPG-dependent PGAM subfamily. In terms of assembly, homodimer.

It carries out the reaction (2R)-2-phosphoglycerate = (2R)-3-phosphoglycerate. The protein operates within carbohydrate degradation; glycolysis; pyruvate from D-glyceraldehyde 3-phosphate: step 3/5. Functionally, catalyzes the interconversion of 2-phosphoglycerate and 3-phosphoglycerate. This is 2,3-bisphosphoglycerate-dependent phosphoglycerate mutase from Erwinia tasmaniensis (strain DSM 17950 / CFBP 7177 / CIP 109463 / NCPPB 4357 / Et1/99).